The chain runs to 545 residues: Thermosome subunit (545 aa).

This sequence belongs to the TCP-1 chaperonin family. As to quaternary structure, forms an oligomeric complex of eight-membered rings.

Its function is as follows. Molecular chaperone; binds unfolded polypeptides in vitro, and has a weak ATPase activity. This is Thermosome subunit (ths) from Methanopyrus kandleri (strain AV19 / DSM 6324 / JCM 9639 / NBRC 100938).